Consider the following 114-residue polypeptide: uncharacterized protein (114 aa).

This is an uncharacterized protein from Bacillus subtilis (strain 168).